The following is a 568-amino-acid chain: Sentrin-specific protease 3 (568 aa).

The disordered stretch occupies residues 1-119 (MKETIQGTGS…PSHRKTCSQR (119 aa)). 3 positions are modified to phosphoserine: S52, S71, and S73. Residues 72–87 (ASEEEEEEEEEDEEEV) show a composition bias toward acidic residues. A compositionally biased stretch (basic residues) spans 106–119 (RALRPSHRKTCSQR). 2 consecutive short sequence motifs (nuclear localization signal) follow at residues 119 to 122 (RRRR) and 147 to 153 (RHRGRRR). The tract at residues 155 to 174 (LAHPKNHLSPQEGGATPQVP) is disordered. Residue S163 is modified to Phosphoserine. T170 is subject to Phosphothreonine. Phosphoserine occurs at positions 175, 182, 206, and 226. Residues 380–537 (HVLTMDDLGT…AFVLQYCKHL (158 aa)) form a protease region. Active-site residues include H459 and D476. The active-site Nucleophile is the C526.

Belongs to the peptidase C48 family. Component of some MLL1/MLL complex, at least composed of the core components KMT2A/MLL1, ASH2L, HCFC1/HCF1, WDR5 and RBBP5, as well as the facultative components BACC1, CHD8, E2F6, HSP70, INO80C, KANSL1, LAS1L, MAX, MCRS1, MGA, MYST1/MOF, PELP1, PHF20, PRP31, RING2, RUVB1/TIP49A, RUVB2/TIP49B, SENP3, TAF1, TAF4, TAF6, TAF7, TAF9 and TEX10. Interacts with EP300, NPM1 and CDCA8. Component of the 5FMC complex, at least composed of PELP1, LAS1L, TEX10, WDR18 and SENP3; the complex interacts with methylated CHTOP and ZNF148. Interacts with NOL9. Interacts with CCAR2.

The protein localises to the nucleus. It is found in the nucleolus. Its subcellular location is the nucleoplasm. The protein resides in the cytoplasm. On oxidative stress, SENP3 degradation is blocked by inhibition of its ubiquitination, which stabilizes it as it accumulates in the nucleoplasm. Protease that releases SUMO2 and SUMO3 monomers from sumoylated substrates, but has only weak activity against SUMO1 conjugates. Deconjugates SUMO2 from MEF2D, which increases its transcriptional activation capability. Deconjugates SUMO2 and SUMO3 from CDCA8. Redox sensor that, when redistributed into nucleoplasm, can act as an effector to enhance HIF1A transcriptional activity by desumoylating EP300. Required for rRNA processing through deconjugation of SUMO2 and SUMO3 from nucleophosmin, NPM1. Plays a role in the regulation of sumoylation status of ZNF148. Functions as a component of the Five Friends of Methylated CHTOP (5FMC) complex; the 5FMC complex is recruited to ZNF148 by methylated CHTOP, leading to desumoylation of ZNF148 and subsequent transactivation of ZNF148 target genes. Deconjugates SUMO2 from KAT5. Catalyzes desumoylation of MRE11. The protein is Sentrin-specific protease 3 (Senp3) of Mus musculus (Mouse).